The sequence spans 613 residues: Dihydroxy-acid dehydratase 3 (613 aa).

D81 is a Mg(2+) binding site. C122 provides a ligand contact to [2Fe-2S] cluster. Residues D123 and K124 each contribute to the Mg(2+) site. The residue at position 124 (K124) is an N6-carboxylysine. Residue C197 coordinates [2Fe-2S] cluster. E493 lines the Mg(2+) pocket. The active-site Proton acceptor is the S519.

This sequence belongs to the IlvD/Edd family. In terms of assembly, homodimer. The cofactor is [2Fe-2S] cluster. Requires Mg(2+) as cofactor.

It catalyses the reaction (2R)-2,3-dihydroxy-3-methylbutanoate = 3-methyl-2-oxobutanoate + H2O. The catalysed reaction is (2R,3R)-2,3-dihydroxy-3-methylpentanoate = (S)-3-methyl-2-oxopentanoate + H2O. The protein operates within amino-acid biosynthesis; L-isoleucine biosynthesis; L-isoleucine from 2-oxobutanoate: step 3/4. Its pathway is amino-acid biosynthesis; L-valine biosynthesis; L-valine from pyruvate: step 3/4. Functions in the biosynthesis of branched-chain amino acids. Catalyzes the dehydration of (2R,3R)-2,3-dihydroxy-3-methylpentanoate (2,3-dihydroxy-3-methylvalerate) into 2-oxo-3-methylpentanoate (2-oxo-3-methylvalerate) and of (2R)-2,3-dihydroxy-3-methylbutanoate (2,3-dihydroxyisovalerate) into 2-oxo-3-methylbutanoate (2-oxoisovalerate), the penultimate precursor to L-isoleucine and L-valine, respectively. In Nocardia farcinica (strain IFM 10152), this protein is Dihydroxy-acid dehydratase 3.